The sequence spans 617 residues: Proline--tRNA ligase (617 aa).

It belongs to the class-II aminoacyl-tRNA synthetase family. ProS type 1 subfamily. Homodimer.

Its subcellular location is the cytoplasm. The catalysed reaction is tRNA(Pro) + L-proline + ATP = L-prolyl-tRNA(Pro) + AMP + diphosphate. In terms of biological role, catalyzes the attachment of proline to tRNA(Pro) in a two-step reaction: proline is first activated by ATP to form Pro-AMP and then transferred to the acceptor end of tRNA(Pro). As ProRS can inadvertently accommodate and process non-cognate amino acids such as alanine and cysteine, to avoid such errors it has two additional distinct editing activities against alanine. One activity is designated as 'pretransfer' editing and involves the tRNA(Pro)-independent hydrolysis of activated Ala-AMP. The other activity is designated 'posttransfer' editing and involves deacylation of mischarged Ala-tRNA(Pro). The misacylated Cys-tRNA(Pro) is not edited by ProRS. This Streptococcus agalactiae serotype V (strain ATCC BAA-611 / 2603 V/R) protein is Proline--tRNA ligase.